We begin with the raw amino-acid sequence, 236 residues long: Leucyl/phenylalanyl-tRNA--protein transferase (236 aa).

It belongs to the L/F-transferase family.

It localises to the cytoplasm. It carries out the reaction N-terminal L-lysyl-[protein] + L-leucyl-tRNA(Leu) = N-terminal L-leucyl-L-lysyl-[protein] + tRNA(Leu) + H(+). The catalysed reaction is N-terminal L-arginyl-[protein] + L-leucyl-tRNA(Leu) = N-terminal L-leucyl-L-arginyl-[protein] + tRNA(Leu) + H(+). The enzyme catalyses L-phenylalanyl-tRNA(Phe) + an N-terminal L-alpha-aminoacyl-[protein] = an N-terminal L-phenylalanyl-L-alpha-aminoacyl-[protein] + tRNA(Phe). Functions in the N-end rule pathway of protein degradation where it conjugates Leu, Phe and, less efficiently, Met from aminoacyl-tRNAs to the N-termini of proteins containing an N-terminal arginine or lysine. This Idiomarina loihiensis (strain ATCC BAA-735 / DSM 15497 / L2-TR) protein is Leucyl/phenylalanyl-tRNA--protein transferase.